The following is a 742-amino-acid chain: MRPGLPSYLIILAVCLFSHLLSSRYGAEAVSEPLDKAFHLLLNTYGRPIRFLRENTTQCTYNSSLRNSTVVRENAISFNFFQSYNQYYVFHMPRCLFAGPLAEQFLNQVDLTETLERYQQRLNTYALVSKDLASYRSFSQQLKAQDSLGEQPTTVPPPIDLSIPHVWMPPQTTPHGWTESHTTSGLHRPHFNQTCILFDGHDLLFSTVTPCLHQGFYLIDELRYVKITLTEDFFVVTVSIDDDTPMLLIFGHLPRVLFKAPYQRDNFILRQTEKHELLVLVKKDQLNRHSYLKDPDFLDAALDFNYLDLSALLRNSFHRYAVDVLKSGRCQMLDRRTVEMAFAYALALFAAARQEEAGAQVSVPRALDRQAALLQIQEFMITCLSQTPPRTTLLLYPTAVDLAKRALWTPNQITDITSLVRLVYILSKQNQQHLIPQWALRQIADFALKLHKTHLASFLSAFARQELYLMGSLVHSMLVHTTERREIFIVETGLCSLAELSHFTQLLAHPHHEYLSDLYTPCSSSGRRDHSLERLTRLFPDATVPATVPAALSILSTMQPSTLETFPDLFCLPLGESFSALTVSEHVSYIVTNQYLIKGISYPVSTTVVGQSLIITQTDSQTKCELTRNMHTTHSITVALNISLENCAFCQSALLEYDDTQGVINIMYMHDSDDVLFALDPYNEVVVSSPRTHYLMLLKNGTVLEVTDVVVDATDSRLLMMSVYALSAIIGIYLLYRMLKTC.

The signal sequence occupies residues 1–23 (MRPGLPSYLIILAVCLFSHLLSS). The Virion surface segment spans residues 24–719 (RYGAEAVSEP…VVDATDSRLL (696 aa)). N-linked (GlcNAc...) asparagine; by host glycans are attached at residues Asn55, Asn62, Asn67, and Asn192. A disulfide bridge links Cys195 with Cys211. The tract at residues 217 to 280 (YLIDELRYVK…QTEKHELLVL (64 aa)) is interaction with gL. 3 disulfides stabilise this stretch: Cys330/Cys383, Cys495/Cys522, and Cys571/Cys624. N-linked (GlcNAc...) asparagine; by host glycans are attached at residues Asn641 and Asn700. A helical transmembrane segment spans residues 720–740 (MMSVYALSAIIGIYLLYRMLK). The Intravirion segment spans residues 741–742 (TC).

The protein belongs to the herpesviridae glycoprotein H family. In terms of assembly, interacts with glycoprotein L (gL); this interaction is necessary for the correct processing and cell surface expression of gH. The heterodimer gH/gL seems to interact with gB trimers during fusion. Forms the envelope pentamer complex (PC) composed of gH, gL, UL128, UL130, and UL131A. The pentamer interacts with host NRP2. Forms the envelope trimer complex composed of gH, gL, and gO. The trimer interacts with host PDGFRA. The trimer also interacts with host EPHA2. The trimer also interacts with host TGFBR3. Interacts with UL116. N-glycosylated, O-glycosylated, and sialylated.

Its subcellular location is the virion membrane. It is found in the host cell membrane. The protein localises to the host endosome membrane. Its function is as follows. The heterodimer glycoprotein H-glycoprotein L is required for the fusion of viral and plasma membranes leading to virus entry into the host cell. Following initial binding to host receptor, membrane fusion is mediated by the fusion machinery composed of gB and the heterodimer gH/gL. May also be involved in the fusion between the virion envelope and the outer nuclear membrane during virion morphogenesis. In human cytomegalovirus, forms two distincts complexes to mediate viral entry, a trimer and a pentamer at the surface of the virion envelope. The gH-gL-gO trimer is required for infection in fibroblasts by interacting with host PDGFRA, and in glioblastoma cells by interacting with host EPHA2. Thsi trimer may also be required in other cell types using host TGFBR3. The gH-gL-UL128-UL130-UL131A pentamer is essential for viral entry in epithelial, endothelial and myeloid cells via interaction with host NRP2. The polypeptide is Envelope glycoprotein H (Human cytomegalovirus (strain Merlin) (HHV-5)).